The following is a 474-amino-acid chain: Poly(A) polymerase catalytic subunit (474 aa).

Catalysis depends on residues aspartate 193 and aspartate 195.

It belongs to the poxviridae poly(A) polymerase catalytic subunit family. As to quaternary structure, heterodimer of a large (catalytic) subunit and a small (regulatory) subunit.

It catalyses the reaction RNA(n) + ATP = RNA(n)-3'-adenine ribonucleotide + diphosphate. In terms of biological role, polymerase that creates the 3'-poly(A) tail of mRNA's. This chain is Poly(A) polymerase catalytic subunit (PAPL), found in Bos taurus (Bovine).